A 707-amino-acid polypeptide reads, in one-letter code: Elongation factor G (707 aa).

The tr-type G domain occupies 8-288 (QFTRNIGIMA…AVCKFLPSPA (281 aa)). GTP-binding positions include 17–24 (AHIDAGKT), 85–89 (DTPGH), and 139–142 (NKMD). Residues 288 to 308 (ADTPTVEGTDPSDPNKVIERK) form a disordered region.

It belongs to the TRAFAC class translation factor GTPase superfamily. Classic translation factor GTPase family. EF-G/EF-2 subfamily.

Its subcellular location is the cytoplasm. In terms of biological role, catalyzes the GTP-dependent ribosomal translocation step during translation elongation. During this step, the ribosome changes from the pre-translocational (PRE) to the post-translocational (POST) state as the newly formed A-site-bound peptidyl-tRNA and P-site-bound deacylated tRNA move to the P and E sites, respectively. Catalyzes the coordinated movement of the two tRNA molecules, the mRNA and conformational changes in the ribosome. In Porphyromonas gingivalis (strain ATCC 33277 / DSM 20709 / CIP 103683 / JCM 12257 / NCTC 11834 / 2561), this protein is Elongation factor G.